We begin with the raw amino-acid sequence, 146 residues long: Putative pre-16S rRNA nuclease (146 aa).

This sequence belongs to the YqgF nuclease family.

It localises to the cytoplasm. Could be a nuclease involved in processing of the 5'-end of pre-16S rRNA. This is Putative pre-16S rRNA nuclease from Pseudomonas syringae pv. syringae (strain B728a).